Consider the following 338-residue polypeptide: Ketol-acid reductoisomerase (NADP(+)) (338 aa).

Positions 1 to 181 (MKVFYDKDAD…GGGRAGIIET (181 aa)) constitute a KARI N-terminal Rossmann domain. NADP(+) contacts are provided by residues 24–27 (YGSQ), R47, and S52. Residue H107 is part of the active site. G133 lines the NADP(+) pocket. One can recognise a KARI C-terminal knotted domain in the interval 182 to 327 (NFREETETDL…EKLRAMMPWI (146 aa)). Residues D190, E194, E226, and E230 each contribute to the Mg(2+) site. Residue S251 coordinates substrate.

This sequence belongs to the ketol-acid reductoisomerase family. Mg(2+) is required as a cofactor.

The catalysed reaction is (2R)-2,3-dihydroxy-3-methylbutanoate + NADP(+) = (2S)-2-acetolactate + NADPH + H(+). The enzyme catalyses (2R,3R)-2,3-dihydroxy-3-methylpentanoate + NADP(+) = (S)-2-ethyl-2-hydroxy-3-oxobutanoate + NADPH + H(+). It participates in amino-acid biosynthesis; L-isoleucine biosynthesis; L-isoleucine from 2-oxobutanoate: step 2/4. It functions in the pathway amino-acid biosynthesis; L-valine biosynthesis; L-valine from pyruvate: step 2/4. Its function is as follows. Involved in the biosynthesis of branched-chain amino acids (BCAA). Catalyzes an alkyl-migration followed by a ketol-acid reduction of (S)-2-acetolactate (S2AL) to yield (R)-2,3-dihydroxy-isovalerate. In the isomerase reaction, S2AL is rearranged via a Mg-dependent methyl migration to produce 3-hydroxy-3-methyl-2-ketobutyrate (HMKB). In the reductase reaction, this 2-ketoacid undergoes a metal-dependent reduction by NADPH to yield (R)-2,3-dihydroxy-isovalerate. This Cupriavidus pinatubonensis (strain JMP 134 / LMG 1197) (Cupriavidus necator (strain JMP 134)) protein is Ketol-acid reductoisomerase (NADP(+)).